Consider the following 502-residue polypeptide: Glycerol kinase (502 aa).

Thr-12 is a binding site for ADP. Thr-12, Thr-13, and Ser-14 together coordinate ATP. Position 12 (Thr-12) interacts with sn-glycerol 3-phosphate. Arg-16 serves as a coordination point for ADP. The sn-glycerol 3-phosphate site is built by Arg-82, Glu-83, Tyr-134, and Asp-243. Arg-82, Glu-83, Tyr-134, Asp-243, and Gln-244 together coordinate glycerol. Positions 265 and 308 each coordinate ADP. Residues Thr-265, Gly-308, Gln-312, and Gly-412 each contribute to the ATP site. Gly-412 provides a ligand contact to ADP.

The protein belongs to the FGGY kinase family.

The catalysed reaction is glycerol + ATP = sn-glycerol 3-phosphate + ADP + H(+). The protein operates within polyol metabolism; glycerol degradation via glycerol kinase pathway; sn-glycerol 3-phosphate from glycerol: step 1/1. With respect to regulation, inhibited by fructose 1,6-bisphosphate (FBP). In terms of biological role, key enzyme in the regulation of glycerol uptake and metabolism. Catalyzes the phosphorylation of glycerol to yield sn-glycerol 3-phosphate. The protein is Glycerol kinase of Methylobacterium nodulans (strain LMG 21967 / CNCM I-2342 / ORS 2060).